The sequence spans 166 residues: Large ribosomal subunit protein uL10 (166 aa).

This sequence belongs to the universal ribosomal protein uL10 family. As to quaternary structure, part of the ribosomal stalk of the 50S ribosomal subunit. The N-terminus interacts with L11 and the large rRNA to form the base of the stalk. The C-terminus forms an elongated spine to which L12 dimers bind in a sequential fashion forming a multimeric L10(L12)X complex.

Its function is as follows. Forms part of the ribosomal stalk, playing a central role in the interaction of the ribosome with GTP-bound translation factors. This chain is Large ribosomal subunit protein uL10, found in Pseudomonas paraeruginosa (strain DSM 24068 / PA7) (Pseudomonas aeruginosa (strain PA7)).